The chain runs to 427 residues: 3-phosphoshikimate 1-carboxyvinyltransferase (427 aa).

Residues Lys20, Ser21, and Arg25 each contribute to the 3-phosphoshikimate site. Lys20 is a phosphoenolpyruvate binding site. Phosphoenolpyruvate is bound by residues Gly92 and Arg120. 3-phosphoshikimate-binding residues include Ser166, Gln168, Asp312, and Lys339. Residue Gln168 participates in phosphoenolpyruvate binding. The active-site Proton acceptor is the Asp312. Residues Arg343 and Arg385 each coordinate phosphoenolpyruvate.

The protein belongs to the EPSP synthase family. In terms of assembly, monomer.

It is found in the cytoplasm. It catalyses the reaction 3-phosphoshikimate + phosphoenolpyruvate = 5-O-(1-carboxyvinyl)-3-phosphoshikimate + phosphate. Its pathway is metabolic intermediate biosynthesis; chorismate biosynthesis; chorismate from D-erythrose 4-phosphate and phosphoenolpyruvate: step 6/7. In terms of biological role, catalyzes the transfer of the enolpyruvyl moiety of phosphoenolpyruvate (PEP) to the 5-hydroxyl of shikimate-3-phosphate (S3P) to produce enolpyruvyl shikimate-3-phosphate and inorganic phosphate. This Streptococcus pyogenes serotype M28 (strain MGAS6180) protein is 3-phosphoshikimate 1-carboxyvinyltransferase.